We begin with the raw amino-acid sequence, 347 residues long: N-acetyl-gamma-glutamyl-phosphate reductase (347 aa).

Residue Cys152 is part of the active site.

Belongs to the NAGSA dehydrogenase family. Type 1 subfamily.

Its subcellular location is the cytoplasm. It carries out the reaction N-acetyl-L-glutamate 5-semialdehyde + phosphate + NADP(+) = N-acetyl-L-glutamyl 5-phosphate + NADPH + H(+). It participates in amino-acid biosynthesis; L-arginine biosynthesis; N(2)-acetyl-L-ornithine from L-glutamate: step 3/4. In terms of biological role, catalyzes the NADPH-dependent reduction of N-acetyl-5-glutamyl phosphate to yield N-acetyl-L-glutamate 5-semialdehyde. This is N-acetyl-gamma-glutamyl-phosphate reductase from Neisseria meningitidis serogroup A / serotype 4A (strain DSM 15465 / Z2491).